The sequence spans 156 residues: Small ribosomal subunit protein uS7c (156 aa).

This sequence belongs to the universal ribosomal protein uS7 family. In terms of assembly, part of the 30S ribosomal subunit.

It localises to the plastid. Its subcellular location is the chloroplast. Its function is as follows. One of the primary rRNA binding proteins, it binds directly to 16S rRNA where it nucleates assembly of the head domain of the 30S subunit. This chain is Small ribosomal subunit protein uS7c (rps7), found in Porphyra purpurea (Red seaweed).